The following is a 226-amino-acid chain: Ribonuclease 3 (226 aa).

The RNase III domain maps to 6 to 128 (IQKLQKILGY…LIGSIFLDSN (123 aa)). Mg(2+) is bound at residue Glu-41. The active site involves Asp-45. Positions 114 and 117 each coordinate Mg(2+). Glu-117 is a catalytic residue. Residues 155-225 (DPKTRLQEYL…AQNALIKLGI (71 aa)) enclose the DRBM domain.

It belongs to the ribonuclease III family. Homodimer. It depends on Mg(2+) as a cofactor.

The protein resides in the cytoplasm. The catalysed reaction is Endonucleolytic cleavage to 5'-phosphomonoester.. Digests double-stranded RNA. Involved in the processing of primary rRNA transcript to yield the immediate precursors to the large and small rRNAs (23S and 16S). Processes some mRNAs, and tRNAs when they are encoded in the rRNA operon. Processes pre-crRNA and tracrRNA of type II CRISPR loci if present in the organism. This chain is Ribonuclease 3, found in Buchnera aphidicola subsp. Baizongia pistaciae (strain Bp).